We begin with the raw amino-acid sequence, 333 residues long: Probable G-protein coupled receptor 33 (333 aa).

Residues 1–30 (MDLINSTDYLINASTLVRNSTQFLAPASKM) lie on the Extracellular side of the membrane. 3 N-linked (GlcNAc...) asparagine glycosylation sites follow: asparagine 5, asparagine 12, and asparagine 19. The helical transmembrane segment at 31 to 53 (IIALSLYISSIIGTITNGLYLWV) threads the bilayer. Topologically, residues 54 to 64 (LRFKMKQTVNT) are cytoplasmic. The helical transmembrane segment at 65-86 (LLFFHLILSYFISTMILPFMAT) threads the bilayer. At 87–103 (SQLQDNHWNFGTALCKV) the chain is on the extracellular side. Cysteine 101 and cysteine 179 are oxidised to a cystine. The chain crosses the membrane as a helical span at residues 104–124 (FNGTLSLGMFTSVFFLSAIGL). The Cytoplasmic segment spans residues 125–143 (DRYLLTLHPVWSQQHRTPR). Residues 144–165 (WASSIVLGVWISAAALSIPYLI) traverse the membrane as a helical segment. The Extracellular segment spans residues 166-209 (FRQTHHDRKGKVTCQNNYAVSTNWESKEMQALRQWIHVACFISR). A helical membrane pass occupies residues 210–230 (FLLGFLLPFFIIIFCYERVAS). Residues 231 to 246 (KVKERSLFKSSKPFKV) lie on the Cytoplasmic side of the membrane. Residues 247 to 268 (MMTAIISFFVCWMPYHIHQGLL) form a helical membrane-spanning segment. The Extracellular portion of the chain corresponds to 269 to 283 (LTMNQSLLLELTLIL). An N-linked (GlcNAc...) asparagine glycan is attached at asparagine 272. The chain crosses the membrane as a helical span at residues 284–303 (TVLTTSFNTIFSPTLYLFVG). Residues 304–333 (ENFKKVFKKSILALFESTFSEDSSVERTQT) are Cytoplasmic-facing.

It belongs to the G-protein coupled receptor 1 family.

It localises to the cell membrane. Orphan receptor; could be a chemoattractant receptor. The sequence is that of Probable G-protein coupled receptor 33 (GPR33) from Pan paniscus (Pygmy chimpanzee).